A 763-amino-acid polypeptide reads, in one-letter code: Nibrin (763 aa).

The FHA domain maps to 22–81; sequence YVVGRKNCAILIPEDQSISRCHATLSVSHPSANLGQTNAASVLSIKDSSKYGTTVNGDKM. BRCT domains lie at 102–179 and 215–324; these read SKYR…CELL and KRKS…NPRR. 3 disordered regions span residues 389–496, 535–593, and 738–763; these read VKET…SSQT, SKAA…SEIE, and QTQQ…KRRR. The segment covering 423–433 has biased composition (basic and acidic residues); that stretch reads LFREDETDTRK. A compositionally biased stretch (polar residues) spans 434 to 443; it reads NTPSLLPTKS. The Nuclear localization signal signature appears at 469 to 474; it reads AKKRDR. The span at 473–482 shows a compositional bias: basic and acidic residues; sequence DRAEDEKEAS. Residues 742-752 show a composition bias toward basic and acidic residues; that stretch reads VREESLAEDLF. Residues 748-757 carry the FxF/Y motif motif; it reads AEDLFRYNPK.

It belongs to the Nibrin family. Component of the MRN complex composed of two heterodimers rad50 and mre11 associated with a single nbn.

The protein localises to the nucleus. It is found in the chromosome. Its subcellular location is the PML body. The protein resides in the telomere. Its function is as follows. Component of the MRN complex, which plays a central role in double-strand break (DSB) repair, DNA recombination, maintenance of telomere integrity and meiosis. The MRN complex is involved in the repair of DNA double-strand breaks (DSBs) via homologous recombination (HR), an error-free mechanism which primarily occurs during S and G2 phases. The complex (1) mediates the end resection of damaged DNA, which generates proper single-stranded DNA, a key initial steps in HR, and is (2) required for the recruitment of other repair factors and efficient activation of ATM and ATR upon DNA damage. The MRN complex possesses single-strand endonuclease activity and double-strand-specific 3'-5' exonuclease activity, which are provided by MRE11, to initiate end resection, which is required for single-strand invasion and recombination. Within the MRN complex, nbn acts as a protein-protein adapter, which specifically recognizes and binds phosphorylated proteins, promoting their recruitment to DNA damage sites. Recruits mre11 and rad50 components of the MRN complex to DSBs in response to DNA damage. Promotes the recruitment of PI3/PI4-kinase family members atm, atr, and probably DNA-PKcs to the DNA damage sites, activating their functions. Mediates the recruitment of phosphorylated rbbp8/CtIP to DSBs, leading to cooperation between the MRN complex and rbbp8/CtIP to initiate end resection. The MRN complex promotes recruitment of topbp1 to DNA damage sites. The MRN complex and rbbp8/CtIP are also required for chromosome alignment during metaphase. In Xenopus laevis (African clawed frog), this protein is Nibrin.